Reading from the N-terminus, the 765-residue chain is Putative ankyrin repeat protein L371 (765 aa).

9 ANK repeats span residues 60–89 (NGNY…RLDV), 93–122 (EGNS…KIIG), 132–161 (KGSV…NANY), 165–194 (DNVN…NLNA), 198–227 (QGST…DQNI), 232–261 (LDFY…NPNH), 265–295 (EGNT…RCRS), 322–353 (DGLT…NLNY), and 357–395 (TGNT…GKTV).

This chain is Putative ankyrin repeat protein L371, found in Acanthamoeba polyphaga mimivirus (APMV).